The primary structure comprises 85 residues: MNYLTLIAAASLLTAGTESKKDGYPVKEGDCAFPCGYDNAYCDKLCKERKADSGYCYWGNILCYCYGLPDKAAIKGYGRCRPGKK.

A signal peptide spans 1-19 (MNYLTLIAAASLLTAGTES). Residues 21–81 (KDGYPVKEGD…AAIKGYGRCR (61 aa)) enclose the LCN-type CS-alpha/beta domain. Disulfide bonds link C31-C80, C35-C56, C42-C63, and C46-C65. P82 is subject to Proline amide.

This sequence belongs to the long (4 C-C) scorpion toxin superfamily. Sodium channel inhibitor family. Alpha subfamily. Expressed by the venom gland.

Its subcellular location is the secreted. Alpha toxins bind voltage-independently at site-3 of sodium channels (Nav) and inhibit the inactivation of the activated channels, thereby blocking neuronal transmission. In Tityus discrepans (Venezuelan scorpion), this protein is Toxin TdNa8.